The sequence spans 485 residues: Ataxin-10 (485 aa).

Belongs to the ataxin-10 family.

The protein resides in the cytoplasm. Its subcellular location is the perinuclear region. The protein localises to the midbody. Its function is as follows. May play a role in the regulation of cytokinesis. May play a role in signaling by stimulating protein glycosylation. Induces neuritogenesis by activating the Ras-MAP kinase pathway and is necessary for the survival of cerebellar neurons. Does not appear to play a major role in ciliogenesis. The polypeptide is Ataxin-10 (atxn10) (Xenopus tropicalis (Western clawed frog)).